Here is a 423-residue protein sequence, read N- to C-terminus: MDFGLLPPEINSGRMYTGPGPGPMLAAATAWDGLAVELHATAAGYASELSALTGAWSGPSSTSMASAAAPYVAWMSATAVHAELAGAQARLAIAAYEAAFAATVPPPVIAANRAQLMVLIATNIFGQNTPAIMMTEAQYMEMWAQDAAAMYGYAGSSATASRMTAFTEPPQTTNHGQLGAQSSAVAQTAATAAGGNLQSAFPQLLSAVPRALQGLALPTASQSASATPQWVTDLGNLSTFLGGAVTGPYTFPGVLPPSGVPYLLGIQSVLVTQNGQGVSALLGKIGGKPITGALAPLAEFALHTPILGSEGLGGGSVSAGIGRAGLVGKLSVPQGWTVAAPEIPSPAAALQATRLAAAPIAATDGAGALLGGMALSGLAGRAAAGSTGHPIGSAAAPAVGAAAAAVEDLATEANIFVIPAMDD.

This sequence belongs to the mycobacterial PPE family.

In terms of biological role, could be required for host endothelial-cell invasion and/or intracellular survival. This is an uncharacterized protein from Mycobacterium tuberculosis (strain CDC 1551 / Oshkosh).